The chain runs to 993 residues: DNA double-strand break repair Rad50 ATPase (993 aa).

ATP contacts are provided by residues R12, 32–38 (NGSGKSS), and Q133. Coiled coils occupy residues 192-222 (LENL…LEKL) and 402-493 (EELK…LEKT). The Zinc-hook domain occupies 452 to 556 (ENELKEKYED…KLNEIDSFKL (105 aa)). Zn(2+) is bound by residues C497 and C500. Coiled-coil stretches lie at residues 570-612 (KVEE…LEND), 646-677 (DSSK…EINL), and 702-731 (ETEK…VLKN).

It belongs to the SMC family. RAD50 subfamily. In terms of assembly, homodimer. Forms a heterotetramer composed of two Mre11 subunits and two Rad50 subunits. Requires Zn(2+) as cofactor.

Functionally, part of the Rad50/Mre11 complex, which is involved in the early steps of DNA double-strand break (DSB) repair. The complex may facilitate opening of the processed DNA ends to aid in the recruitment of HerA and NurA. Rad50 controls the balance between DNA end bridging and DNA resection via ATP-dependent structural rearrangements of the Rad50/Mre11 complex. The polypeptide is DNA double-strand break repair Rad50 ATPase (Methanococcus maripaludis (strain DSM 14266 / JCM 13030 / NBRC 101832 / S2 / LL)).